A 1381-amino-acid polypeptide reads, in one-letter code: MTAPNSTPASSRKRVRRRRQDKPALSAKLVLDAHVKGDVGVIATDLFADLFPHLWANGDSQDTVHVAIAPWAPSQTPEANNWSIVPVIRSSTVAPSTVQFSPSSLALQSFATHLQQAAPSKLSGHNKGGIEILILDVSPIELDTVFVNLDGELAKRLEDGEGTFFREHPVNGKGKARADATPEEHLTAALRTALGTLKIVHSGDFFPLPLPPHPVTHQPPNPGRITLCEPVAQGILAPTTKIIVSRVRTSKTKRSSASGQQQGRKLNGVAEDDEDAYFSAAEEDRDSKTNAQTAETDADDTEFEPQAGEDEDNLSDDSLDEIISLQVPTLPTTVTGQSTIGTGTPTMLRGRKTNGPGSVISSYTATTARPDRPRGRLFKAHGLMKPIPPDLLHPKPTPEDDEEACIYVDMRDLTRVGCFSGDWIRVEAASEPPSNGLGAFGLGSFVEQEADEINWRPARVFGLPEGYSSRSATRSHHSRHDSRNSSFFEAQSQKSNPPAYTSPILLANLDNPPYLRLSPIKRPSSSIIKGVAAQSKTSSTLKPPFAREVILQHVRTPTAVERDVQSAVMAGLKHYFERRLRVLRTGDLIAVPIDTQLGKALQESTIPGEDSAIDEVLGLIAATRPGQSLHYDDVAWFRVGHVQAMKQDTTEAVDGEEAEDLWGGIACVDISLTHLEQSGSVTGRIPGTISNSWQYYLGIRKLPKHQQNPGLPAQLQTLEPEKQYVSSLRRKLRELMAAATSKPALHLNLPPLAILLVSTQRHIGKAATAMQACSDIGLHTFAIDAYDIVNDGGGGGGSDVKTAGFLTSRAERAMSCGPESCVLLVRHIEALTADRMVSSIKEILADARVLIATTTEVEKVPDGIRALFTHELEMSAPDEQEREGILSSILADRGIGLDHGVDLSGIALKTAALVAGDLVDVVDRALVAQRSRLEKLTAKATGSITFRDVQLAGGPAASGLTKQDFELAVDAARKNFADSIGAPKIPNVTWDDVGGLGNVKDAITETIQLPLERPELFAKGMKKRSGILFYGPPGTGKTLLAKAIATEYSLNFFSVKGPELLNMYIGESEANVRRVFQRARDARPCVVFFDELDSVAPKRGNQGDSGGVMDRIVSQLLAELDGMSGGEGGGGGVFVIGATNRPDLLDPALLRPGRFDKMLYLGVSDTHDKQVTIMEALTRKFTLHPTVSLRSVAERLPFTYTGADFYALCSDAMLKAVTRQATLVDTKIRELNAAAGPEGKQISTAYFFDHYATKEDISVMVTEQDFLDAHRELVPSVSAGELEHYEQVRAMFEGAKDKDKKKEGAGGDGNGVDGLESGNRNGMLAITMGDDGAGAESTKKDGKGKGKAADNEVNGAGEGKGKEGVSPFQESGGDEDEGLYD.

The segment covering 1-10 has biased composition (polar residues); that stretch reads MTAPNSTPAS. Disordered stretches follow at residues 1–23, 247–315, 333–374, and 467–499; these read MTAP…QDKP, VRTS…DNLS, TVTG…DRPR, and YSSR…NPPA. Residues 11 to 20 are compositionally biased toward basic residues; the sequence is SRKRVRRRRQ. Composition is skewed to acidic residues over residues 270–284 and 296–315; these read AEDD…AEED and TDAD…DNLS. Composition is skewed to polar residues over residues 333 to 345, 355 to 367, and 487 to 499; these read TVTG…TGTP, GPGS…TATT, and FFEA…NPPA. An ATP-binding site is contributed by 1031–1038; the sequence is GPPGTGKT. 2 stretches are compositionally biased toward basic and acidic residues: residues 1294 to 1305 and 1337 to 1350; these read GAKDKDKKKEGA and STKK…KAAD. Positions 1294–1381 are disordered; it reads GAKDKDKKKE…GGDEDEGLYD (88 aa). Positions 1372-1381 are enriched in acidic residues; it reads GGDEDEGLYD.

Belongs to the AAA ATPase family. As to quaternary structure, interacts with PEX1; forming the PEX1-PEX6 AAA ATPase complex, which is composed of a heterohexamer formed by a trimer of PEX1-PEX6 dimers.

It is found in the cytoplasm. The protein resides in the cytosol. Its subcellular location is the peroxisome membrane. It catalyses the reaction ATP + H2O = ADP + phosphate + H(+). Component of the PEX1-PEX6 AAA ATPase complex, a protein dislocase complex that mediates the ATP-dependent extraction of the PEX5 receptor from peroxisomal membranes, an essential step for PEX5 recycling. Specifically recognizes PEX5 monoubiquitinated at 'Cys-6', and pulls it out of the peroxisome lumen through the PEX2-PEX10-PEX12 retrotranslocation channel. Extraction by the PEX1-PEX6 AAA ATPase complex is accompanied by unfolding of the TPR repeats and release of bound cargo from PEX5. The chain is Peroxisomal ATPase PEX6 (pex-6) from Neurospora crassa (strain ATCC 24698 / 74-OR23-1A / CBS 708.71 / DSM 1257 / FGSC 987).